Reading from the N-terminus, the 1829-residue chain is Protein let-418 (1829 aa).

2 stretches are compositionally biased toward acidic residues: residues 1–17 (MSTEEDPSLVDAEESME) and 25–39 (ATEETEEEEEQEQGD). Disordered regions lie at residues 1–81 (MSTE…YNST) and 147–198 (MAAQ…SDQE). Basic residues predominate over residues 48-63 (RSSRKKGGKGGKKGSK). PHD-type zinc fingers lie at residues 256–303 (NDYC…CIEH) and 317–365 (DEFC…CETV). Chromo domains follow at residues 401–458 (LKPP…PPEF) and 489–550 (MQIH…NEDI). The Helicase ATP-binding domain maps to 614–798 (RHCWSNGTDA…FHLLNFLSKE (185 aa)). 627-634 (DEMGLGKT) provides a ligand contact to ATP. Positions 749–752 (DEAH) match the DEAH box motif. Residues 930–1093 (LLQKMLRKLK…GKTMSKTELD (164 aa)) enclose the Helicase C-terminal domain. Disordered regions lie at residues 1168–1198 (ASYQTKETEGQEEEEEEETEVIKEDEKEPDP), 1234–1289 (SENM…MPPL), 1415–1495 (AANG…ARPS), and 1745–1829 (NGER…PMET). The span at 1177-1186 (GQEEEEEEET) shows a compositional bias: acidic residues. 2 stretches are compositionally biased toward polar residues: residues 1234 to 1247 (SENMGTDWSKQNQT) and 1418 to 1427 (GSAQGSSRST). The span at 1429-1444 (KPKEEPKEEPMEKEDA) shows a compositional bias: basic and acidic residues. Over residues 1446–1455 (ETVNGATSEP) the composition is skewed to polar residues. Over residues 1474–1490 (DEAKEPKEEPIETEKPR) the composition is skewed to basic and acidic residues. Positions 1749 to 1773 (MEEDEPVEAEEEEGVKQEPDDETQD) are enriched in acidic residues. Residues 1792 to 1811 (DVPSTSAAAAVSSETAADAE) show a composition bias toward low complexity. The span at 1819-1829 (APTDEPEPMET) shows a compositional bias: acidic residues.

In terms of assembly, component of the MEC (MEP-1-containing complex) complex that contains let-418, mep-1 and hda-1. Component of a NURD complex that contains let-418, hda-1, lin-40 and lin-53. Interacts with lin-1. Interacts with pie-1. Interacts with akir-1. In terms of tissue distribution, expressed in embryos and larva.

It is found in the nucleus. Part of a NuRD (Nucleosome Remodeling and Deacetylase) complex which is implicated in the synMuv B pathway that negatively regulates specification of vulval cell fate. This negative regulation is thought to be mediated via interaction with the promoter of lin-39, a key regulator in vulva development, and is dependent on the presence lin-1. Contributes to negative regulation of lag-2 which is expressed in the gut during larval development. Has a broad role in development. In association with akir-1, plays a role in regulating the transcription of antimicrobial peptide genes in response to fungal infection. The chain is Protein let-418 from Caenorhabditis elegans.